Consider the following 131-residue polypeptide: Superoxide dismutase [Ni] (131 aa).

Residues Met-1–Ala-14 constitute a propeptide that is removed on maturation. The Ni(2+) site is built by His-15, Cys-16, and Cys-20.

It belongs to the nickel superoxide dismutase family. Homohexamer. The hexameric protein has roughly the shape of a hollow sphere with an outer diameter of 72 Angstroms and a large inner cavity. Requires Ni(2+) as cofactor.

The protein resides in the cytoplasm. It catalyses the reaction 2 superoxide + 2 H(+) = H2O2 + O2. This Streptomyces seoulensis protein is Superoxide dismutase [Ni] (sodN).